The following is a 650-amino-acid chain: Chaperone protein DnaK (650 aa).

Phosphothreonine; by autocatalysis is present on T200. Residues 612–636 (QQAGAAGAAGAAEGAAHAGGAQQAA) show a composition bias toward low complexity. A disordered region spans residues 612-650 (QQAGAAGAAGAAEGAAHAGGAQQAADDVVDAEFKEVKKD).

This sequence belongs to the heat shock protein 70 family.

Acts as a chaperone. In Burkholderia ambifaria (strain ATCC BAA-244 / DSM 16087 / CCUG 44356 / LMG 19182 / AMMD) (Burkholderia cepacia (strain AMMD)), this protein is Chaperone protein DnaK.